A 503-amino-acid polypeptide reads, in one-letter code: Ell-associated factor Eaf (503 aa).

Composition is skewed to polar residues over residues threonine 119–alanine 145 and glutamate 167–asparagine 186. 3 disordered regions span residues threonine 119–aspartate 220, glycine 250–valine 360, and glycine 372–aspartate 503. Position 196 is a phosphoserine (serine 196). A compositionally biased stretch (low complexity) spans serine 202–serine 215. Composition is skewed to polar residues over residues glycine 250–isoleucine 273 and methionine 298–serine 307. The span at asparagine 308–serine 337 shows a compositional bias: low complexity. Acidic residues predominate over residues aspartate 385–glutamate 400. 3 stretches are compositionally biased toward low complexity: residues glutamine 406 to glutamine 437, histidine 454 to glutamine 472, and leucine 487 to serine 497.

Belongs to the EAF family.

The protein resides in the nucleus. Its function is as follows. Promotes transcriptional elongation by Su(Tpl)/ELL. Essential for development. The protein is Ell-associated factor Eaf of Drosophila sechellia (Fruit fly).